Consider the following 253-residue polypeptide: MSLLSVMPATTAQQSRAEQVAHHFHWPLVAVEALCPTPLLLWVGPTGLALKSADGKHQHPITAQLQGGSIGLAGPDSWVRGQPLARAVGIKGQHTPTVVDATAGLGGDGWLMARMGCSMHWAERVPLMGLLLQEGLEQAHQDAQRAEVARRVTLHQADAIQLLQNMQEPPQVVYLDPMFPHEGKGSLPRKAMVQLRQLAGEDQDLPQLFELAMATAEQRVVLKRPLKAPLLTRAKPNFQLKGRSTRFDVYATG.

S-adenosyl-L-methionine contacts are provided by residues 123-124 (ER) and aspartate 176.

It belongs to the methyltransferase superfamily. RsmJ family.

The protein localises to the cytoplasm. It carries out the reaction guanosine(1516) in 16S rRNA + S-adenosyl-L-methionine = N(2)-methylguanosine(1516) in 16S rRNA + S-adenosyl-L-homocysteine + H(+). Functionally, specifically methylates the guanosine in position 1516 of 16S rRNA. The protein is Ribosomal RNA small subunit methyltransferase J of Magnetococcus marinus (strain ATCC BAA-1437 / JCM 17883 / MC-1).